A 220-amino-acid chain; its full sequence is Deoxyribose-phosphate aldolase (220 aa).

The active-site Proton donor/acceptor is D89. The Schiff-base intermediate with acetaldehyde role is filled by K151. The active-site Proton donor/acceptor is K180.

Belongs to the DeoC/FbaB aldolase family. DeoC type 1 subfamily.

The protein resides in the cytoplasm. It catalyses the reaction 2-deoxy-D-ribose 5-phosphate = D-glyceraldehyde 3-phosphate + acetaldehyde. It participates in carbohydrate degradation; 2-deoxy-D-ribose 1-phosphate degradation; D-glyceraldehyde 3-phosphate and acetaldehyde from 2-deoxy-alpha-D-ribose 1-phosphate: step 2/2. Its function is as follows. Catalyzes a reversible aldol reaction between acetaldehyde and D-glyceraldehyde 3-phosphate to generate 2-deoxy-D-ribose 5-phosphate. The polypeptide is Deoxyribose-phosphate aldolase (Macrococcus caseolyticus (strain JCSC5402) (Macrococcoides caseolyticum)).